The primary structure comprises 215 residues: Cytochrome b6 (215 aa).

A helical membrane pass occupies residues 32–52; sequence IFYCLGGITLTCFLIQFATGF. Cys35 contributes to the heme c binding site. Residues His86 and His100 each coordinate heme b. 3 helical membrane-spanning segments follow: residues 90-110, 116-136, and 186-206; these read ASMM…TGGF, LTWV…VTGY, and LHTF…FLMI. Residues His187 and His202 each coordinate heme b.

Belongs to the cytochrome b family. PetB subfamily. In terms of assembly, the 4 large subunits of the cytochrome b6-f complex are cytochrome b6, subunit IV (17 kDa polypeptide, PetD), cytochrome f and the Rieske protein, while the 4 small subunits are PetG, PetL, PetM and PetN. The complex functions as a dimer. The cofactor is heme b. Heme c serves as cofactor.

The protein localises to the cellular thylakoid membrane. Component of the cytochrome b6-f complex, which mediates electron transfer between photosystem II (PSII) and photosystem I (PSI), cyclic electron flow around PSI, and state transitions. This Synechococcus elongatus protein is Cytochrome b6.